Consider the following 164-residue polypeptide: Transcription elongation factor GreA (164 aa).

The protein belongs to the GreA/GreB family.

In terms of biological role, necessary for efficient RNA polymerase transcription elongation past template-encoded arresting sites. The arresting sites in DNA have the property of trapping a certain fraction of elongating RNA polymerases that pass through, resulting in locked ternary complexes. Cleavage of the nascent transcript by cleavage factors such as GreA or GreB allows the resumption of elongation from the new 3'terminus. GreA releases sequences of 2 to 3 nucleotides. The polypeptide is Transcription elongation factor GreA (Helicobacter pylori (strain P12)).